A 422-amino-acid polypeptide reads, in one-letter code: Metallocarboxypeptidase A (422 aa).

The signal sequence occupies residues 1–17; sequence MRSVLSFALLAANVVSA. A propeptide spans 18 to 112 (activation peptide); the sequence is AVLAPFDYSG…FEAYSAGYAP (95 aa). One can recognise a Peptidase M14 domain in the interval 119 to 419; sequence SYHSYQDHLS…AGTVAMLKAV (301 aa). Residues His179 and Glu182 each contribute to the Zn(2+) site. Substrate is bound by residues 179–182, Arg237, and 254–255; these read HARE and NR. Cys248 and Cys271 are joined by a disulfide. A Zn(2+)-binding site is contributed by His309. 310–311 contributes to the substrate binding site; it reads SY. Glu385 functions as the Proton donor/acceptor in the catalytic mechanism.

It belongs to the peptidase M14 family. It depends on Zn(2+) as a cofactor.

The protein localises to the secreted. Functionally, extracellular metalloprotease that contributes to pathogenicity. The chain is Metallocarboxypeptidase A (MCPA) from Arthroderma otae (strain ATCC MYA-4605 / CBS 113480) (Microsporum canis).